A 498-amino-acid polypeptide reads, in one-letter code: 3-octaprenyl-4-hydroxybenzoate carboxy-lyase (498 aa).

N175 is a Mn(2+) binding site. Prenylated FMN contacts are provided by residues 178–180 (IYR), 192–194 (RWL), and 197–198 (RG). E241 lines the Mn(2+) pocket. The active-site Proton donor is D290.

This sequence belongs to the UbiD family. Homohexamer. It depends on prenylated FMN as a cofactor. The cofactor is Mn(2+).

It is found in the cell membrane. The enzyme catalyses a 4-hydroxy-3-(all-trans-polyprenyl)benzoate + H(+) = a 2-(all-trans-polyprenyl)phenol + CO2. Its pathway is cofactor biosynthesis; ubiquinone biosynthesis. Functionally, catalyzes the decarboxylation of 3-octaprenyl-4-hydroxy benzoate to 2-octaprenylphenol, an intermediate step in ubiquinone biosynthesis. In Pectobacterium atrosepticum (strain SCRI 1043 / ATCC BAA-672) (Erwinia carotovora subsp. atroseptica), this protein is 3-octaprenyl-4-hydroxybenzoate carboxy-lyase.